A 251-amino-acid chain; its full sequence is Hydroxyacylglutathione hydrolase (251 aa).

Residues His-53, His-55, Asp-57, His-58, His-110, Asp-127, and His-165 each coordinate Zn(2+).

This sequence belongs to the metallo-beta-lactamase superfamily. Glyoxalase II family. In terms of assembly, monomer. Requires Zn(2+) as cofactor.

The catalysed reaction is an S-(2-hydroxyacyl)glutathione + H2O = a 2-hydroxy carboxylate + glutathione + H(+). The protein operates within secondary metabolite metabolism; methylglyoxal degradation; (R)-lactate from methylglyoxal: step 2/2. Thiolesterase that catalyzes the hydrolysis of S-D-lactoyl-glutathione to form glutathione and D-lactic acid. This Yersinia pseudotuberculosis serotype IB (strain PB1/+) protein is Hydroxyacylglutathione hydrolase.